The following is a 379-amino-acid chain: Homoserine O-succinyltransferase (379 aa).

An AB hydrolase-1 domain is found at 51–360; it reads NAVLICHALS…DSPYGHDAFL (310 aa). Catalysis depends on serine 157, which acts as the Nucleophile. Arginine 227 lines the substrate pocket. Active-site residues include aspartate 323 and histidine 356. Aspartate 357 is a substrate binding site.

It belongs to the AB hydrolase superfamily. MetX family. In terms of assembly, homodimer.

It is found in the cytoplasm. The catalysed reaction is L-homoserine + succinyl-CoA = O-succinyl-L-homoserine + CoA. The protein operates within amino-acid biosynthesis; L-methionine biosynthesis via de novo pathway; O-succinyl-L-homoserine from L-homoserine: step 1/1. With respect to regulation, requires MetW for activity. Functionally, transfers a succinyl group from succinyl-CoA to L-homoserine, forming succinyl-L-homoserine. This is Homoserine O-succinyltransferase from Pseudomonas putida (strain ATCC 47054 / DSM 6125 / CFBP 8728 / NCIMB 11950 / KT2440).